The primary structure comprises 2713 residues: Histone-lysine N-methyltransferase 2B (2713 aa).

Positions 1–11 are enriched in gly residues; it reads MAAAAGGGSCP. 3 disordered regions span residues 1 to 65, 82 to 524, and 542 to 783; these read MAAA…GEDT, RLWA…PTVV, and VSAR…ARVA. Alanine 2 carries the post-translational modification N-acetylalanine. Residues 12 to 24 are compositionally biased toward low complexity; it reads GPGSARGRFPGRP. A Menin-binding motif (MBM) motif is present at residues 17–36; the sequence is RGRFPGRPRGSGGGGGRGGR. Composition is skewed to gly residues over residues 25 to 38 and 49 to 60; these read RGSG…GRGN and RGGGAAGPGGAE. A DNA-binding region (a.T hook 1) is located at residues 37-44; that stretch reads GNGAERVR. The span at 109 to 123 shows a compositional bias: acidic residues; it reads PEEESSDGESEEEEF. Positions 110-117 form a DNA-binding region, a.T hook 2; sequence EEESSDGE. Phosphoserine occurs at positions 113, 114, and 118. Basic residues predominate over residues 144 to 158; that stretch reads QRGRAPRGRGRKHKT. The span at 340–360 shows a compositional bias: basic and acidic residues; the sequence is PQRKDGDEPERGSCRKKQEQK. The segment at residues 357-365 is a DNA-binding region (a.T hook 3); it reads QEQKLEEEE. Over residues 361–393 the composition is skewed to acidic residues; sequence LEEEEEEEEKEGEEKEEKDDNEDNNKQEEEEET. The span at 394–412 shows a compositional bias: basic and acidic residues; the sequence is ERAVAEEEAMLAKEKEEAK. Pro residues predominate over residues 414–460; it reads PSPPLTPPVPSPPPPLPPPSTSPPPPASPLPPPVSPPPPLSPPPYPA. Low complexity predominate over residues 501-517; the sequence is GTLSPTPNPSTTTGSPL. Residues 555–566 show a composition bias toward basic and acidic residues; sequence RFMDEDPPKPPK. The span at 577-605 shows a compositional bias: pro residues; the sequence is ATSPPAPQEPVPVSSPPRVPTPPSTPVPL. Over residues 606 to 617 the composition is skewed to basic and acidic residues; the sequence is PEKRRSILREPT. Pro residues predominate over residues 627-645; sequence LPPPPPAPPPAPSPPPAPA. Composition is skewed to low complexity over residues 646-657, 715-728, and 738-756; these read TPSRRPLLLRAP, VPVV…EVPP, and QQLQ…LLPQ. A compositionally biased stretch (pro residues) spans 757–774; that stretch reads ALPPQQPQAQPPPSPQHT. A Glycyl lysine isopeptide (Lys-Gly) (interchain with G-Cter in SUMO2) cross-link involves residue lysine 810. Serine 826, serine 849, and serine 866 each carry phosphoserine. 2 disordered regions span residues 831–872 and 899–964; these read TEEA…QGPR and SALP…HHGK. Over residues 841-862 the composition is skewed to basic and acidic residues; the sequence is TPDRGCVRSEDESMEAKRDRAS. Residues 912–922 are compositionally biased toward low complexity; it reads EDTSSASETES. Serine 941 bears the Phosphoserine mark. Basic residues predominate over residues 953-964; that stretch reads TPRRSLPSHHGK. The CXXC-type zinc-finger motif lies at 964–1011; that stretch reads KKMRMARCGHCRGCLRVQDCGSCVNCLDKPKFGGPNTKKQCCVYRKCD. Zn(2+) is bound by residues cysteine 971, cysteine 974, cysteine 977, cysteine 983, cysteine 986, cysteine 989, cysteine 1005, and cysteine 1010. Disordered regions lie at residues 1032–1076 and 1088–1138; these read LLPW…DSLL and QRPS…LQPV. 4 positions are modified to phosphoserine: serine 1037, serine 1040, serine 1098, and serine 1101. Lysine 1142 participates in a covalent cross-link: Glycyl lysine isopeptide (Lys-Gly) (interchain with G-Cter in SUMO2). PHD-type zinc fingers lie at residues 1207 to 1258, 1255 to 1309, and 1341 to 1402; these read PMVC…CKFC, CKFC…CVRC, and GNYC…CAGA. Residues 1410 to 1510 enclose the Bromo domain; that stretch reads ALSGALQGGL…GLLLKLLESA (101 aa). Residues 1550–1572 are disordered; sequence RQQESETPESGQPPGDPSAAFQS. Residues 1584–1624 form a C2HC pre-PHD-type zinc finger; it reads PRQCALCLKYGDADSKEAGRLLYIGQNEWTHVNCAIWSAEV. The PHD-type 4 zinc-finger motif lies at 1645 to 1692; the sequence is MRCELCLKPGATVGCCLSSCLSNFHFMCARASYCIFQDDKKVFCQKHT. The FYR N-terminal domain maps to 1733-1789; that stretch reads VINVLIGSIRINSLGTLSDLSDCEGRLFPIGYQCSRLYWSTVDARRRCWYRCRILEY. Over residues 1808 to 1821 the composition is skewed to polar residues; sequence QTIVHSPTPSSDTD. Disordered regions lie at residues 1808 to 1973, 2056 to 2104, 2116 to 2160, 2279 to 2356, and 2382 to 2408; these read QTIV…GPDF, QLDG…PPED, NLGG…RTFA, VSTF…RCPL, and YSAG…PKRV. Composition is skewed to low complexity over residues 1872-1890 and 1923-1933; these read PLGG…PSSL and RRTSSPLRTSP. Phosphoserine is present on residues serine 1926 and serine 1932. Over residues 1939 to 1950 the composition is skewed to polar residues; sequence LSTSVTALTPTS. Residues 2058–2068 are compositionally biased toward acidic residues; the sequence is DGVDDGTDSEA. Phosphothreonine is present on residues threonine 2064 and threonine 2079. The span at 2084–2093 shows a compositional bias: gly residues; it reads PGVGRGGVLG. A compositionally biased stretch (polar residues) spans 2140–2153; it reads NGSQPPQSLSTSPA. A phosphoserine mark is found at serine 2286 and serine 2346. The 82-residue stretch at 2409–2490 folds into the FYR C-terminal domain; that stretch reads GPHLRFEISS…QRCQHYKFRY (82 aa). The WDR5 interaction motif (WIN) signature appears at 2506 to 2511; sequence GAARAE. The 117-residue stretch at 2573–2689 folds into the SET domain; that stretch reads EAVGVYRSAI…RGEELTYDYK (117 aa). S-adenosyl-L-methionine is bound by residues histidine 2583, arginine 2585, tyrosine 2627, and 2650 to 2651; that span reads NH. Positions 2653 and 2701 each coordinate Zn(2+). The Post-SET domain occupies 2697–2713; the sequence is NKLPCNCGAKRCRRFLN. Residue asparagine 2702 participates in S-adenosyl-L-methionine binding. The Zn(2+) site is built by cysteine 2703 and cysteine 2708.

This sequence belongs to the class V-like SAM-binding methyltransferase superfamily. Histone-lysine methyltransferase family. TRX/MLL subfamily. As to quaternary structure, component of the menin-associated histone methyltransferase complex, at least composed of KMT2B/MLL4, ASH2L, RBBP5, WDR5, DPY30, MEN1; the complex interacts with POLR2A and POLR2B via MEN1. Interacts with NFE2. Interacts with KDM6B. Interacts (via WIN motif) with WDR5. Interacts (via MBM motif) with MEN1.

It is found in the nucleus. It catalyses the reaction L-lysyl(4)-[histone H3] + S-adenosyl-L-methionine = N(6)-methyl-L-lysyl(4)-[histone H3] + S-adenosyl-L-homocysteine + H(+). The catalysed reaction is N(6)-methyl-L-lysyl(4)-[histone H3] + S-adenosyl-L-methionine = N(6),N(6)-dimethyl-L-lysyl(4)-[histone H3] + S-adenosyl-L-homocysteine + H(+). In terms of biological role, histone methyltransferase that catalyzes methyl group transfer from S-adenosyl-L-methionine to the epsilon-amino group of 'Lys-4' of histone H3 (H3K4) via a non-processive mechanism. Part of chromatin remodeling machinery predominantly forms H3K4me1 and H3K4me2 methylation marks at active chromatin sites where transcription and DNA repair take place. Likely plays a redundant role with KMT2C in enriching H3K4me1 marks on primed and active enhancer elements. Plays a central role in beta-globin locus transcription regulation by being recruited by NFE2. Plays an important role in controlling bulk H3K4me during oocyte growth and preimplantation development. Required during the transcriptionally active period of oocyte growth for the establishment and/or maintenance of bulk H3K4 trimethylation (H3K4me3), global transcriptional silencing that preceeds resumption of meiosis, oocyte survival and normal zygotic genome activation. This Mus musculus (Mouse) protein is Histone-lysine N-methyltransferase 2B (Kmt2b).